Consider the following 171-residue polypeptide: 3-hydroxydecanoyl-[acyl-carrier-protein] dehydratase (171 aa).

The active site involves His70.

The protein belongs to the thioester dehydratase family. FabA subfamily. In terms of assembly, homodimer.

The protein resides in the cytoplasm. The enzyme catalyses a (3R)-hydroxyacyl-[ACP] = a (2E)-enoyl-[ACP] + H2O. It carries out the reaction (3R)-hydroxydecanoyl-[ACP] = (2E)-decenoyl-[ACP] + H2O. It catalyses the reaction (2E)-decenoyl-[ACP] = (3Z)-decenoyl-[ACP]. The protein operates within lipid metabolism; fatty acid biosynthesis. Its function is as follows. Necessary for the introduction of cis unsaturation into fatty acids. Catalyzes the dehydration of (3R)-3-hydroxydecanoyl-ACP to E-(2)-decenoyl-ACP and then its isomerization to Z-(3)-decenoyl-ACP. Can catalyze the dehydratase reaction for beta-hydroxyacyl-ACPs with saturated chain lengths up to 16:0, being most active on intermediate chain length. The protein is 3-hydroxydecanoyl-[acyl-carrier-protein] dehydratase of Ectopseudomonas mendocina (strain ymp) (Pseudomonas mendocina).